We begin with the raw amino-acid sequence, 951 residues long: Protein translocase subunit SecA 1 (951 aa).

ATP-binding positions include Gln87, 105 to 109, and Asp525; that span reads GEGKT. The disordered stretch occupies residues 911–942; that stretch reads PVVSADRSSRDPGNPASWGKVGRNEDCPCGSG. Zn(2+) is bound by residues Cys937, Cys939, Cys948, and His949.

The protein belongs to the SecA family. In terms of assembly, monomer and homodimer. Part of the essential Sec protein translocation apparatus which comprises SecA, SecYEG and auxiliary proteins SecDF-YajC and YidC. Requires Zn(2+) as cofactor.

It is found in the cell inner membrane. The protein resides in the cytoplasm. It carries out the reaction ATP + H2O + cellular proteinSide 1 = ADP + phosphate + cellular proteinSide 2.. Its function is as follows. Part of the Sec protein translocase complex. Interacts with the SecYEG preprotein conducting channel. Has a central role in coupling the hydrolysis of ATP to the transfer of proteins into and across the cell membrane, serving both as a receptor for the preprotein-SecB complex and as an ATP-driven molecular motor driving the stepwise translocation of polypeptide chains across the membrane. The polypeptide is Protein translocase subunit SecA 1 (Nitrobacter hamburgensis (strain DSM 10229 / NCIMB 13809 / X14)).